Reading from the N-terminus, the 202-residue chain is Small ribosomal subunit protein uS5 (202 aa).

Positions 42–105 (LKDEVLKIMP…ILAKLSIVPV (64 aa)) constitute an S5 DRBM domain. Phosphothreonine is present on Thr192.

The protein belongs to the universal ribosomal protein uS5 family. As to quaternary structure, component of the small ribosomal subunit. Interacts with zinc finger protein ZNF277 (via zinc-finger domains); the interaction is direct; the interaction is extra-ribosomal. Interaction with ZNF277 competes with the binding of RPS2 to protein arginine methyltransferase PRMT3. Citrullinated by PADI4 in the Arg/Gly-rich region. Post-translationally, asymmetric arginine dimethylation by PRMT3 occurs at multiple sites in the Arg/Gly-rich region. In terms of processing, monoubiquitinated by RNF10 when a ribosome has stalled during translation, leading to its degradation by the proteasome. Deubiquitinated by USP10, preventing degradation by the proteasome and promoting 40S ribosome subunit recycling following ribosome dissociation.

Its subcellular location is the cytoplasm. It localises to the nucleus. The protein localises to the nucleolus. Component of the ribosome, a large ribonucleoprotein complex responsible for the synthesis of proteins in the cell. The small ribosomal subunit (SSU) binds messenger RNAs (mRNAs) and translates the encoded message by selecting cognate aminoacyl-transfer RNA (tRNA) molecules. The large subunit (LSU) contains the ribosomal catalytic site termed the peptidyl transferase center (PTC), which catalyzes the formation of peptide bonds, thereby polymerizing the amino acids delivered by tRNAs into a polypeptide chain. The nascent polypeptides leave the ribosome through a tunnel in the LSU and interact with protein factors that function in enzymatic processing, targeting, and the membrane insertion of nascent chains at the exit of the ribosomal tunnel. Plays a role in the assembly and function of the 40S ribosomal subunit. Mutations in this protein affects the control of translational fidelity. Involved in nucleolar processing of pre-18S ribosomal RNA and ribosome assembly. This chain is Small ribosomal subunit protein uS5 (RPS2), found in Cricetulus griseus (Chinese hamster).